The chain runs to 222 residues: GTP cyclohydrolase 1 (222 aa).

Residues C111, H114, and C182 each contribute to the Zn(2+) site.

The protein belongs to the GTP cyclohydrolase I family. In terms of assembly, toroid-shaped homodecamer, composed of two pentamers of five dimers.

The enzyme catalyses GTP + H2O = 7,8-dihydroneopterin 3'-triphosphate + formate + H(+). It functions in the pathway cofactor biosynthesis; 7,8-dihydroneopterin triphosphate biosynthesis; 7,8-dihydroneopterin triphosphate from GTP: step 1/1. The sequence is that of GTP cyclohydrolase 1 from Klebsiella pneumoniae subsp. pneumoniae (strain ATCC 700721 / MGH 78578).